Here is a 148-residue protein sequence, read N- to C-terminus: Nickel and cobalt resistance protein CnrR (148 aa).

An N-terminal signal peptide occupies residues 1–26 (MMKSRTRRLSLSTLFGALLGVSVAAA). Over 28–148 (LYYSHRNEAG…LIDALRRGSQ (121 aa)) the chain is Periplasmic. Residues 54-117 (NEREILELKE…AAGDLQRATL (64 aa)) adopt a coiled-coil conformation.

This sequence to A.xylosoxydans NccX.

Its subcellular location is the periplasm. Functionally, cnrH alone is able to activate cnr expression, while both CnrY and CrnR (CnrX) are needed for nickel induction of CnrH. Has been suggested to bind nickel. This Cupriavidus metallidurans (strain ATCC 43123 / DSM 2839 / NBRC 102507 / CH34) (Ralstonia metallidurans) protein is Nickel and cobalt resistance protein CnrR (cnrR).